The chain runs to 191 residues: Fe/S biogenesis protein NfuA (191 aa).

[4Fe-4S] cluster-binding residues include Cys149 and Cys152.

It belongs to the NfuA family. In terms of assembly, homodimer. [4Fe-4S] cluster is required as a cofactor.

In terms of biological role, involved in iron-sulfur cluster biogenesis. Binds a 4Fe-4S cluster, can transfer this cluster to apoproteins, and thereby intervenes in the maturation of Fe/S proteins. Could also act as a scaffold/chaperone for damaged Fe/S proteins. The protein is Fe/S biogenesis protein NfuA of Pectobacterium atrosepticum (strain SCRI 1043 / ATCC BAA-672) (Erwinia carotovora subsp. atroseptica).